The sequence spans 94 residues: Cyclin-dependent kinases regulatory subunit (94 aa).

This sequence belongs to the CKS family. Forms a homohexamer that can probably bind six kinase subunits. Interacts with cdk-1.

Its subcellular location is the nucleus. Its function is as follows. Binds to the catalytic subunit of the cyclin dependent kinases and is essential for their biological function. Has a role in the exit from M phase during early mitotic cell division. More specifically, thought to act by degrading B-type cyclins that causes breakdown of nuclear envelope and exit mitosis. In Caenorhabditis elegans, this protein is Cyclin-dependent kinases regulatory subunit (cks-1).